Consider the following 284-residue polypeptide: NADH-cytochrome b5 reductase 1 (284 aa).

Residues 7–27 (KLVVVIVIVVVPLLFKFIIGP) form a helical membrane-spanning segment. Positions 38 to 142 (NDFQSFPLVE…KGPRGNYHYE (105 aa)) constitute an FAD-binding FR-type domain. 148–180 (HLGMIAGGTGIAPMYQIMKAIAMDSHDTTKVSL) serves as a coordination point for FAD.

It belongs to the flavoprotein pyridine nucleotide cytochrome reductase family. In terms of assembly, monomer. Component of the 2-(3-amino-3-carboxypropyl)histidine synthase complex composed of DPH1, DPH2, KTI11/DPH3 and a NADH-dependent reductase, predominantly CBR1. Interacts with KTI11/DPH3. Interacts with STE20. It depends on FAD as a cofactor.

It is found in the mitochondrion outer membrane. It carries out the reaction 2 Fe(III)-[cytochrome b5] + NADH = 2 Fe(II)-[cytochrome b5] + NAD(+) + H(+). The enzyme catalyses 2 Fe(3+)-[Dph3] + NADH = 2 Fe(2+)-[Dph3] + NAD(+) + H(+). The protein operates within protein modification; peptidyl-diphthamide biosynthesis. Competitively inhibited by NAD(+). Inhibited by mercurials such as p-chloromercuribenzoate (PCMB) and HgCl(2). Enzymatic activity increases under anaerobic conditions. NADH-dependent reductase for KTI11/DPH3 and cytochrome b5. Required for the first step of diphthamide biosynthesis, a post-translational modification of histidine which occurs in elongation factor 2. DPH1 and DPH2 transfer a 3-amino-3-carboxypropyl (ACP) group from S-adenosyl-L-methionine (SAM) to a histidine residue, the reaction is assisted by a reduction system comprising KTI11/DPH3 and a NADH-dependent reductase, predominantly CBR1. By reducing KTI11/DPH3, also involved in the formation of the tRNA wobble base modification mcm5s 2U (5-methoxycarbonylmethyl-2-thiouridine), mediated by the elongator complex. The cytochrome b5/NADH cytochrome b5 reductase electron transfer system supports the catalytic activity of several sterol biosynthetic enzymes. Plays a role in bud morphology. In Saccharomyces cerevisiae (strain YJM789) (Baker's yeast), this protein is NADH-cytochrome b5 reductase 1 (CBR1).